We begin with the raw amino-acid sequence, 610 residues long: UvrABC system protein C (610 aa).

The 79-residue stretch at Ser-16–Val-94 folds into the GIY-YIG domain. One can recognise a UVR domain in the interval Gln-204–Val-239.

Belongs to the UvrC family. As to quaternary structure, interacts with UvrB in an incision complex.

The protein resides in the cytoplasm. Functionally, the UvrABC repair system catalyzes the recognition and processing of DNA lesions. UvrC both incises the 5' and 3' sides of the lesion. The N-terminal half is responsible for the 3' incision and the C-terminal half is responsible for the 5' incision. The protein is UvrABC system protein C of Yersinia pseudotuberculosis serotype I (strain IP32953).